Consider the following 182-residue polypeptide: Adenine phosphoribosyltransferase (182 aa).

It belongs to the purine/pyrimidine phosphoribosyltransferase family. Homodimer.

It localises to the cytoplasm. It catalyses the reaction AMP + diphosphate = 5-phospho-alpha-D-ribose 1-diphosphate + adenine. Its pathway is purine metabolism; AMP biosynthesis via salvage pathway; AMP from adenine: step 1/1. In terms of biological role, catalyzes a salvage reaction resulting in the formation of AMP, that is energically less costly than de novo synthesis. This is Adenine phosphoribosyltransferase from Pseudomonas aeruginosa (strain LESB58).